We begin with the raw amino-acid sequence, 34 residues long: Photosystem II reaction center protein Psb30 (34 aa).

Residues 6–26 (IVAQLLSLALVTLSGPAVIFL) traverse the membrane as a helical segment.

It belongs to the Psb30/Ycf12 family. As to quaternary structure, PSII is composed of 1 copy each of membrane proteins PsbA, PsbB, PsbC, PsbD, PsbE, PsbF, PsbH, PsbI, PsbJ, PsbK, PsbL, PsbM, PsbT, PsbX, PsbY, PsbZ, Psb30/Ycf12, peripheral proteins of the oxygen-evolving complex and a large number of cofactors. It forms dimeric complexes.

It is found in the plastid. Its subcellular location is the chloroplast thylakoid membrane. Its function is as follows. A core subunit of photosystem II (PSII), probably helps stabilize the reaction center. The protein is Photosystem II reaction center protein Psb30 of Emiliania huxleyi (Coccolithophore).